We begin with the raw amino-acid sequence, 593 residues long: ESX-1 secretion system protein EccCb1 (593 aa).

2 consecutive FtsK domains span residues 66-260 (RQEV…NETQ) and 350-546 (QVPL…EKND). Residues 85–92 (GAPQTGKS) and 377–384 (GAPKSGKT) each bind ATP.

As to quaternary structure, part of the ESX-1 / type VII secretion system (T7SS), which is composed of cytosolic and membrane components. The ESX-1 membrane complex is composed of EccB1, EccCa1, EccCb1, EccD1 and EccE1.

The protein resides in the cytoplasm. Functionally, part of the ESX-1 / type VII specialized secretion system (T7SS), which exports several proteins including EsxA and EsxB. Plays a role in DNA conjugation, in both donor and recipient strains. This Mycolicibacterium smegmatis (strain MKD8) (Mycobacterium smegmatis) protein is ESX-1 secretion system protein EccCb1 (eccCb1).